Consider the following 557-residue polypeptide: Aerobic glycerol-3-phosphate dehydrogenase (557 aa).

An FAD-binding site is contributed by 21–49; the sequence is DVVIIGGGITGAGIALDASERGMKVALVE.

This sequence belongs to the FAD-dependent glycerol-3-phosphate dehydrogenase family. Requires FAD as cofactor.

The protein localises to the cytoplasm. The catalysed reaction is a quinone + sn-glycerol 3-phosphate = dihydroxyacetone phosphate + a quinol. Its pathway is polyol metabolism; glycerol degradation via glycerol kinase pathway; glycerone phosphate from sn-glycerol 3-phosphate (aerobic route): step 1/1. This Staphylococcus saprophyticus subsp. saprophyticus (strain ATCC 15305 / DSM 20229 / NCIMB 8711 / NCTC 7292 / S-41) protein is Aerobic glycerol-3-phosphate dehydrogenase (glpD).